Consider the following 454-residue polypeptide: Bifunctional protein GlmU (454 aa).

A pyrophosphorylase region spans residues 1–231; the sequence is MSRPTVSLIV…EAETLGVNTR (231 aa). Residues 11-14, K25, Q78, 83-84, 106-108, G143, E157, N172, and N229 contribute to the UDP-N-acetyl-alpha-D-glucosamine site; these read LAAG, GT, and YGD. D108 serves as a coordination point for Mg(2+). A Mg(2+)-binding site is contributed by N229. Residues 232-252 form a linker region; it reads AQLAAAEAEFQRRARAAALED. The segment at 253 to 454 is N-acetyltransferase; that stretch reads GVTLTAPDTV…ARDASKKGTN (202 aa). The UDP-N-acetyl-alpha-D-glucosamine site is built by R318 and K336. H348 acts as the Proton acceptor in catalysis. Positions 351 and 362 each coordinate UDP-N-acetyl-alpha-D-glucosamine. Residues A365, 371–372, S390, S408, and R425 contribute to the acetyl-CoA site; that span reads NY.

In the N-terminal section; belongs to the N-acetylglucosamine-1-phosphate uridyltransferase family. It in the C-terminal section; belongs to the transferase hexapeptide repeat family. Homotrimer. Requires Mg(2+) as cofactor.

It localises to the cytoplasm. The enzyme catalyses alpha-D-glucosamine 1-phosphate + acetyl-CoA = N-acetyl-alpha-D-glucosamine 1-phosphate + CoA + H(+). The catalysed reaction is N-acetyl-alpha-D-glucosamine 1-phosphate + UTP + H(+) = UDP-N-acetyl-alpha-D-glucosamine + diphosphate. The protein operates within nucleotide-sugar biosynthesis; UDP-N-acetyl-alpha-D-glucosamine biosynthesis; N-acetyl-alpha-D-glucosamine 1-phosphate from alpha-D-glucosamine 6-phosphate (route II): step 2/2. Its pathway is nucleotide-sugar biosynthesis; UDP-N-acetyl-alpha-D-glucosamine biosynthesis; UDP-N-acetyl-alpha-D-glucosamine from N-acetyl-alpha-D-glucosamine 1-phosphate: step 1/1. It participates in bacterial outer membrane biogenesis; LPS lipid A biosynthesis. In terms of biological role, catalyzes the last two sequential reactions in the de novo biosynthetic pathway for UDP-N-acetylglucosamine (UDP-GlcNAc). The C-terminal domain catalyzes the transfer of acetyl group from acetyl coenzyme A to glucosamine-1-phosphate (GlcN-1-P) to produce N-acetylglucosamine-1-phosphate (GlcNAc-1-P), which is converted into UDP-GlcNAc by the transfer of uridine 5-monophosphate (from uridine 5-triphosphate), a reaction catalyzed by the N-terminal domain. This chain is Bifunctional protein GlmU, found in Cereibacter sphaeroides (strain ATCC 17025 / ATH 2.4.3) (Rhodobacter sphaeroides).